The primary structure comprises 157 residues: ATP synthase subunit b 1 (157 aa).

Residues Leu7 to Leu29 traverse the membrane as a helical segment.

The protein belongs to the ATPase B chain family. In terms of assembly, F-type ATPases have 2 components, F(1) - the catalytic core - and F(0) - the membrane proton channel. F(1) has five subunits: alpha(3), beta(3), gamma(1), delta(1), epsilon(1). F(0) has three main subunits: a(1), b(2) and c(10-14). The alpha and beta chains form an alternating ring which encloses part of the gamma chain. F(1) is attached to F(0) by a central stalk formed by the gamma and epsilon chains, while a peripheral stalk is formed by the delta and b chains.

Its subcellular location is the cell inner membrane. In terms of biological role, f(1)F(0) ATP synthase produces ATP from ADP in the presence of a proton or sodium gradient. F-type ATPases consist of two structural domains, F(1) containing the extramembraneous catalytic core and F(0) containing the membrane proton channel, linked together by a central stalk and a peripheral stalk. During catalysis, ATP synthesis in the catalytic domain of F(1) is coupled via a rotary mechanism of the central stalk subunits to proton translocation. Its function is as follows. Component of the F(0) channel, it forms part of the peripheral stalk, linking F(1) to F(0). The chain is ATP synthase subunit b 1 from Methylococcus capsulatus (strain ATCC 33009 / NCIMB 11132 / Bath).